We begin with the raw amino-acid sequence, 404 residues long: L-cysteine:1D-myo-inositol 2-amino-2-deoxy-alpha-D-glucopyranoside ligase (404 aa).

Cys-35 lines the Zn(2+) pocket. L-cysteinyl-5'-AMP is bound by residues 35–38 (CGIT), Thr-50, and 73–75 (NVT). The 'HIGH' region signature appears at 37–47 (ITPYDATHLGH). Residues 178–183 (ERGGDP) carry the 'ERGGDP' region motif. Trp-219 is a binding site for L-cysteinyl-5'-AMP. Cys-223 is a Zn(2+) binding site. Residue 241–243 (GND) participates in L-cysteinyl-5'-AMP binding. A Zn(2+)-binding site is contributed by His-248. Ile-275 provides a ligand contact to L-cysteinyl-5'-AMP. Positions 281-285 (KMSKS) match the 'KMSKS' region motif.

The protein belongs to the class-I aminoacyl-tRNA synthetase family. MshC subfamily. As to quaternary structure, monomer. It depends on Zn(2+) as a cofactor.

The enzyme catalyses 1D-myo-inositol 2-amino-2-deoxy-alpha-D-glucopyranoside + L-cysteine + ATP = 1D-myo-inositol 2-(L-cysteinylamino)-2-deoxy-alpha-D-glucopyranoside + AMP + diphosphate + H(+). In terms of biological role, catalyzes the ATP-dependent condensation of GlcN-Ins and L-cysteine to form L-Cys-GlcN-Ins. This chain is L-cysteine:1D-myo-inositol 2-amino-2-deoxy-alpha-D-glucopyranoside ligase, found in Salinispora tropica (strain ATCC BAA-916 / DSM 44818 / JCM 13857 / NBRC 105044 / CNB-440).